Consider the following 201-residue polypeptide: Potassium-transporting ATPase KdpC subunit (201 aa).

Residues 13–33 (IIFIIFTILCGGIYTIFITGI) traverse the membrane as a helical segment.

It belongs to the KdpC family. The system is composed of three essential subunits: KdpA, KdpB and KdpC.

The protein localises to the cell membrane. Functionally, part of the high-affinity ATP-driven potassium transport (or Kdp) system, which catalyzes the hydrolysis of ATP coupled with the electrogenic transport of potassium into the cytoplasm. This subunit acts as a catalytic chaperone that increases the ATP-binding affinity of the ATP-hydrolyzing subunit KdpB by the formation of a transient KdpB/KdpC/ATP ternary complex. The chain is Potassium-transporting ATPase KdpC subunit from Clostridium botulinum (strain Alaska E43 / Type E3).